The sequence spans 249 residues: Small ribosomal subunit protein eS6 (249 aa).

Residues 216-229 (RMKEAKEKRQEQIA) show a composition bias toward basic and acidic residues. The segment at 216–249 (RMKEAKEKRQEQIAKRRRLSSLRASTSKSESSQK) is disordered. A phosphoserine mark is found at serine 235, serine 236, serine 240, serine 244, and serine 247. A compositionally biased stretch (low complexity) spans 236 to 249 (SLRASTSKSESSQK).

It belongs to the eukaryotic ribosomal protein eS6 family. In terms of assembly, component of the small ribosomal subunit. Ribosomal protein S6 is the major substrate of protein kinases in eukaryote ribosomes. The phosphorylation is stimulated by growth factors, tumor promoting agents, and mitogens. It is dephosphorylated at growth arrest.

It localises to the cytoplasm. Component of the 40S small ribosomal subunit. Plays an important role in controlling cell growth and proliferation through the selective translation of particular classes of mRNA. The polypeptide is Small ribosomal subunit protein eS6 (rps6) (Oncorhynchus mykiss (Rainbow trout)).